Reading from the N-terminus, the 494-residue chain is Alpha-amylase-related protein (494 aa).

The signal sequence occupies residues 1 to 20 (MIKFALALTLCLAGASLSLA). A Pyrrolidone carboxylic acid modification is found at Gln-21. Residues Cys-48 and Cys-104 are joined by a disulfide bond. Positions 118, 169, and 178 each coordinate Ca(2+). Cys-157 and Cys-171 are joined by a disulfide. Chloride is bound at residue Arg-206. The active-site Nucleophile is the Asp-208. His-212 contacts Ca(2+). The Proton donor role is filled by Glu-245. Residues Asn-308 and Arg-343 each coordinate chloride. Intrachain disulfides connect Cys-376/Cys-382, Cys-418/Cys-441, and Cys-448/Cys-460.

The protein belongs to the glycosyl hydrolase 13 family. As to quaternary structure, monomer. It depends on Ca(2+) as a cofactor. Requires chloride as cofactor.

The protein localises to the secreted. It catalyses the reaction Endohydrolysis of (1-&gt;4)-alpha-D-glucosidic linkages in polysaccharides containing three or more (1-&gt;4)-alpha-linked D-glucose units.. The protein is Alpha-amylase-related protein (Amyrel) of Drosophila kikkawai (Fruit fly).